Consider the following 422-residue polypeptide: MVDWDKEAQRFRQRRQEAEKQEELASSEGQADEPSDDPGLSQALPQKHLGLEDKQQGLPNEEEAKGEDFAKDQEQKHKKTFNHRKYINWTYLSRSKNKKLQLKSVSWSRLILAAAFLFMIIFSAFWLSPLNRIATIEVSGNNIVPQEQILYGSGLRENMTYLGIESKTGVVDNRLKQLFPSVRSVQLNAKGNRTVEVNVQEFRAIGYVKKQDFYYPVLENHIMLDGAIPYLDQDIPLFTGFEDQELLHLANQLSKLSDDLLAKINEVVNISDDNYPNHIALKMEDGNIVVGFIDSIADRMQYYDQIVSELEGKTGVINMEVGSYFQEKNPLNDPFASPEEKASYQEKVDQAKEKSKEKQAKADKHSSESKLGDKPKPRGEQSGASEEVTSSQRQTSSQSSPRPGTNSSQQSSTVTQTRSSNS.

2 stretches are compositionally biased toward basic and acidic residues: residues 1–23 and 62–75; these read MVDW…KQEE and EEAK…DQEQ. The disordered stretch occupies residues 1 to 77; it reads MVDWDKEAQR…DFAKDQEQKH (77 aa). The Cytoplasmic portion of the chain corresponds to 1–109; it reads MVDWDKEAQR…LQLKSVSWSR (109 aa). The chain crosses the membrane as a helical span at residues 110–130; sequence LILAAAFLFMIIFSAFWLSPL. Positions 131–202 constitute a POTRA domain; that stretch reads NRIATIEVSG…RTVEVNVQEF (72 aa). The Extracellular segment spans residues 131–422; the sequence is NRIATIEVSG…TVTQTRSSNS (292 aa). The segment at 329–422 is disordered; the sequence is NPLNDPFASP…TVTQTRSSNS (94 aa). The segment covering 338 to 379 has biased composition (basic and acidic residues); the sequence is PEEKASYQEKVDQAKEKSKEKQAKADKHSSESKLGDKPKPRG. The span at 389-422 shows a compositional bias: low complexity; it reads TSSQRQTSSQSSPRPGTNSSQQSSTVTQTRSSNS.

This sequence belongs to the FtsQ/DivIB family. DivIB subfamily.

Its subcellular location is the cell membrane. Cell division protein that may be involved in stabilizing or promoting the assembly of the division complex. This chain is Cell division protein DivIB, found in Aerococcus urinae (strain CCUG 59500 / ACS-120-V-Col10a).